Reading from the N-terminus, the 545-residue chain is POTE ankyrin domain family member H (545 aa).

ANK repeat units lie at residues 180–208, 209–238, 242–271, 275–304, 308–337, 341–370, and 374–404; these read LHRA…KKDK, QKRT…QLNI, KKRT…DPNI, YGNT…DIES, HGLT…NLNA, YGRT…DVSS, and SGQT…QILK. The interval 406-524 is disordered; sequence SSENSNPEQD…KQLSEEQNTG (119 aa). Composition is skewed to basic and acidic residues over residues 414–429 and 443–458; these read QDLK…RLKG and EINK…EMKK. Residues 513–524 show a composition bias toward polar residues; that stretch reads TQKQLSEEQNTG.

It belongs to the POTE family.

This Homo sapiens (Human) protein is POTE ankyrin domain family member H (POTEH).